Here is a 733-residue protein sequence, read N- to C-terminus: tRNA (guanine(27)-N(2))-dimethyltransferase (733 aa).

A compositionally biased stretch (acidic residues) spans 1-18 (MENMAEEELLPLEKEEVE). Residues 1-78 (MENMAEEELL…LASAPEEAKS (78 aa)) form a disordered region. The residue at position 26 (Thr26) is a Phosphothreonine. 2 stretches are compositionally biased toward low complexity: residues 39–49 (PDSALDSAPTP) and 57–73 (PALA…ASAP). The residue at position 66 (Ser66) is a Phosphoserine. Positions 135–139 (HKLRR) match the Nucleolar localization signal motif. The segment at 184-206 (YHCIICSATITRRTDMLGHVRRH) adopts a C2H2-type zinc-finger fold. Positions 227 to 688 (EILKEADTDV…APLMQFKSIL (462 aa)) constitute a Trm1 methyltransferase domain. Arg260, Asp307, Asp357, and Ala358 together coordinate S-adenosyl-L-methionine. 4 residues coordinate Zn(2+): Cys488, Cys491, Cys513, and Cys515. A Glycyl lysine isopeptide (Lys-Gly) (interchain with G-Cter in SUMO2) cross-link involves residue Lys585. 2 positions are modified to phosphoserine: Ser612 and Ser707.

It belongs to the class I-like SAM-binding methyltransferase superfamily. Trm1 family. In terms of tissue distribution, widely expressed.

It localises to the nucleus. Its subcellular location is the nucleolus. The catalysed reaction is guanosine(27) in tRNA(Tyr) + 2 S-adenosyl-L-methionine = N(2)-dimethylguanosine(27) in tRNA(Tyr) + 2 S-adenosyl-L-homocysteine + 2 H(+). In terms of biological role, specifically dimethylates a single guanine residue at position 27 of tRNA(Tyr) using S-adenosyl-L-methionine as donor of the methyl groups. Dimethylation at position 27 of tRNA(Tyr) is required for efficient translation of tyrosine codons. Also required to maintain 3-(3-amino-3-carboxypropyl)uridine (acp3U) in the D-loop of several cytoplasmic tRNAs. The chain is tRNA (guanine(27)-N(2))-dimethyltransferase from Homo sapiens (Human).